We begin with the raw amino-acid sequence, 1275 residues long: Inner capsid protein lambda-1 (1275 aa).

Basic residues predominate over residues 1–12 (MKRIPRKTKGKS). The disordered stretch occupies residues 1–149 (MKRIPRKTKG…DNEGGSNQKP (149 aa)). 2 stretches are compositionally biased toward basic and acidic residues: residues 18–35 (DSTE…DKQN) and 75–117 (NNDE…DKSK). Positions 118–149 (AQVTYSDTGINNANELSRSGNVDNEGGSNQKP) are enriched in polar residues. The segment at 181-203 (YQCHVCSAVLFSPLDLDAHVASH) adopts a C2H2-type zinc-finger fold.

This sequence belongs to the orthoreovirus lambda-1 protein family. In terms of assembly, homodecamer; each decamer is made up of two conformers of VP2, called VP2A and VP2B. 12 homodecamers assemble to form an icosahedral capsid. Interacts with protein mu-NS; in viral inclusions. The cofactor is Mg(2+). Mn(2+) serves as cofactor.

Its subcellular location is the virion. It carries out the reaction ATP + H2O = ADP + phosphate + H(+). Inner capsid protein that self-assembles to form an icosahedral capsid with a T=2 symmetry, which consists of 120 copies of VP2, with channels at each of its five-fold vertices. This capsid constitutes the innermost concentric layer of the viral mature particle. Its function is as follows. Displays NTPase, RNA 5'-triphosphatase (RTPase) and RNA helicase activities. Helicase activity might be involved in unwinding or reannealing dsRNA during RNA synthesis. RTPase enzymatic activity represents the first step in RNA capping, which yields a 5'-diphosphorylated plus-strand RNA. The polypeptide is Inner capsid protein lambda-1 (L3) (Reovirus type 3 (strain Dearing) (T3D)).